The sequence spans 158 residues: MQGTLSVWLAKRGLIHRSLGFDYQGIETLQIKPEDWHSIAVILYVYGYNYLRSQCAYDVAPGGLLASVYHLTRIEYGVNQAEEVCIKVFMHRSNPRIPSVFWVWKSTDFQERESYDMLGITYDSHPRLKRILMPESWIGWPLRKDYIAPNFYEIQDAY.

Belongs to the complex I 30 kDa subunit family. In terms of assembly, NDH is composed of at least 16 different subunits, 5 of which are encoded in the nucleus.

Its subcellular location is the plastid. The protein resides in the chloroplast thylakoid membrane. The enzyme catalyses a plastoquinone + NADH + (n+1) H(+)(in) = a plastoquinol + NAD(+) + n H(+)(out). It carries out the reaction a plastoquinone + NADPH + (n+1) H(+)(in) = a plastoquinol + NADP(+) + n H(+)(out). NDH shuttles electrons from NAD(P)H:plastoquinone, via FMN and iron-sulfur (Fe-S) centers, to quinones in the photosynthetic chain and possibly in a chloroplast respiratory chain. The immediate electron acceptor for the enzyme in this species is believed to be plastoquinone. Couples the redox reaction to proton translocation, and thus conserves the redox energy in a proton gradient. In Arabis hirsuta (Hairy rock-cress), this protein is NAD(P)H-quinone oxidoreductase subunit J, chloroplastic.